Here is a 119-residue protein sequence, read N- to C-terminus: Histone H1B, sperm (119 aa).

Residues 8 to 77 (THPPVATAVV…QNKGSFRVNK (70 aa)) form the H15 domain. Residues 76 to 119 (NKTALPKKKKAAKKPKAKKVKKPKSAAKKKTNRARAPKTKKNRN) form a disordered region. Residues 80 to 119 (LPKKKKAAKKPKAKKVKKPKSAAKKKTNRARAPKTKKNRN) are compositionally biased toward basic residues.

Belongs to the histone H1/H5 family.

It is found in the nucleus. Its subcellular location is the chromosome. Histones H1 are necessary for the condensation of nucleosome chains into higher-order structures. The sequence is that of Histone H1B, sperm from Platynereis dumerilii (Dumeril's clam worm).